We begin with the raw amino-acid sequence, 462 residues long: Gamma-glutamylethanolamide synthetase GlnA4 (462 aa).

A GS beta-grasp domain is found at 30–126; that stretch reads GDIDTVVLAF…AVADLAWEDG (97 aa). Residues 133–462 form the GS catalytic domain; the sequence is PRQILRRQLE…WELRRSFERM (330 aa). Mg(2+)-binding residues include glutamate 156 and glutamate 158. Glutamate 214 is a binding site for ATP. Mg(2+)-binding residues include glutamate 219 and glutamate 226. Glycine 270 contacts L-glutamate. A Mg(2+)-binding site is contributed by histidine 274. 276–278 lines the ATP pocket; that stretch reads HLS. L-glutamate-binding residues include arginine 325 and arginine 343. Arginine 343 and arginine 348 together coordinate ATP. Glutamate 359 lines the Mg(2+) pocket. Arginine 361 contacts L-glutamate.

It belongs to the glutamine synthetase family. Mg(2+) serves as cofactor.

It catalyses the reaction ethanolamine + L-glutamate + ATP = gamma-L-glutamylethanolamide + ADP + phosphate + H(+). It participates in amine and polyamine degradation; ethanolamine degradation. Its activity is regulated as follows. Very slightly decreased activity with glutamine synthetase (GS) inhibitor methionine sulfoximine (MSO). In terms of biological role, involved in the catabolism of monoamine ethanolamine. Catalyzes the ATP-dependent gamma-glutamylation of ethanolamine. No activity with polyamines. No complementation of the L-glutamine auxotrophy of an E.coli glnA mutant. Enables survival of S.coelicolor under high local environmental ethanolamine conditions. May play a role during starvation conditions to limit intracellular ethanolamine concentration, which in excess is toxic to the cells. This is Gamma-glutamylethanolamide synthetase GlnA4 from Streptomyces coelicolor (strain ATCC BAA-471 / A3(2) / M145).